Consider the following 140-residue polypeptide: Small ribosomal subunit protein uS12 (140 aa).

The residue at position 102 (Asp102) is a 3-methylthioaspartic acid.

Belongs to the universal ribosomal protein uS12 family. In terms of assembly, part of the 30S ribosomal subunit. Contacts proteins S8 and S17. May interact with IF1 in the 30S initiation complex.

With S4 and S5 plays an important role in translational accuracy. Its function is as follows. Interacts with and stabilizes bases of the 16S rRNA that are involved in tRNA selection in the A site and with the mRNA backbone. Located at the interface of the 30S and 50S subunits, it traverses the body of the 30S subunit contacting proteins on the other side and probably holding the rRNA structure together. The combined cluster of proteins S8, S12 and S17 appears to hold together the shoulder and platform of the 30S subunit. The sequence is that of Small ribosomal subunit protein uS12 from Bacillus cereus (strain G9842).